The following is a 380-amino-acid chain: MAPNIRKSHPLLKIINNSLIDLPAPSNISAWWNFGSLLAVCLTTQILTGLLLAMHYTADTSLAFSSVAHTCRNVQYGWLIRNLHANGASFFFICIFLHIGRGLYYGSYLYKETWNTGVILLLTLMATAFVGYVLPWGQMSFWGATVITNLFSAIPYIGQTLVEWAWGGFSVDNPTLTRFFALHFLLPFVITGITITHLMFLHESGSNNPLGISSNSDKIPFHPYYSLKDILGLALMLTPFLTLALFSPNLLGDPENFTPANPLVTPPHIKPEWYFLFAYAILRSIPNKLGGVLALAASVLILLLIPFLHKSKQRTMTFRPLSQALFWLLVANLLILTWVGSQPVEHPFIIIGQMASLSYFTILLILFPAIGTLENKMLNY.

The next 4 membrane-spanning stretches (helical) occupy residues 34–54 (FGSLLAVCLTTQILTGLLLAM), 78–99 (WLIRNLHANGASFFFICIFLHI), 114–134 (WNTGVILLLTLMATAFVGYVL), and 179–199 (FFALHFLLPFVITGITITHLM). Heme b-binding residues include His-84 and His-98. Positions 183 and 197 each coordinate heme b. Residue His-202 participates in a ubiquinone binding. 4 consecutive transmembrane segments (helical) span residues 227-247 (LKDILGLALMLTPFLTLALFS), 289-309 (LGGVLALAASVLILLLIPFLH), 321-341 (LSQALFWLLVANLLILTWVGS), and 348-368 (FIIIGQMASLSYFTILLILFP).

This sequence belongs to the cytochrome b family. The cytochrome bc1 complex contains 11 subunits: 3 respiratory subunits (MT-CYB, CYC1 and UQCRFS1), 2 core proteins (UQCRC1 and UQCRC2) and 6 low-molecular weight proteins (UQCRH/QCR6, UQCRB/QCR7, UQCRQ/QCR8, UQCR10/QCR9, UQCR11/QCR10 and a cleavage product of UQCRFS1). This cytochrome bc1 complex then forms a dimer. Heme b serves as cofactor.

The protein resides in the mitochondrion inner membrane. In terms of biological role, component of the ubiquinol-cytochrome c reductase complex (complex III or cytochrome b-c1 complex) that is part of the mitochondrial respiratory chain. The b-c1 complex mediates electron transfer from ubiquinol to cytochrome c. Contributes to the generation of a proton gradient across the mitochondrial membrane that is then used for ATP synthesis. The sequence is that of Cytochrome b (MT-CYB) from Syrmaticus reevesii (Reeves's pheasant).